A 100-amino-acid chain; its full sequence is Ferredoxin-2 (100 aa).

The 2Fe-2S ferredoxin-type domain maps to 4 to 97 (YKVTLINEEE…DCTIMTHQES (94 aa)). Residues C42, C47, C50, and C81 each contribute to the [2Fe-2S] cluster site.

This sequence belongs to the 2Fe2S plant-type ferredoxin family. The cofactor is [2Fe-2S] cluster.

In terms of biological role, ferredoxins are iron-sulfur proteins that transfer electrons in a wide variety of metabolic reactions. The chain is Ferredoxin-2 from Aphanothece sacrum.